The primary structure comprises 95 residues: Enhancer of yellow 2 transcription factor (95 aa).

This sequence belongs to the ENY2 family. In terms of assembly, component of the nuclear pore complex (NPC)-associated AMEX complex (anchoring and mRNA export complex), composed of at least e(y)2 and xmas-2. Component of the SAGA transcription coactivator-HAT complexes, at least composed of Ada2b, e(y)2, Pcaf/Gcn5, Taf10 and Nipped-A/Trrap. Within the SAGA complex, e(y)2, Sgf11, and not/nonstop form an additional subcomplex of SAGA called the DUB module (deubiquitination module). Component of the THO complex, composed of at least e(y)2, HPR1, THO2, THOC5, THOC6 and THOC7. Interacts with e(y)1. Interacts with su(Hw) (via zinc fingers). Interacts with xmas-2; required for localization to the nuclear periphery. Interacts with the nuclear pore complex (NPC).

The protein resides in the nucleus. It is found in the nucleoplasm. It localises to the cytoplasm. Its function is as follows. Involved in mRNA export coupled transcription activation by association with both the AMEX and the SAGA complexes. The SAGA complex is a multiprotein complex that activates transcription by remodeling chromatin and mediating histone acetylation and deubiquitination. Within the SAGA complex, participates in a subcomplex that specifically deubiquitinates histone H2B. The SAGA complex is recruited to specific gene promoters by activators, where it is required for transcription. Required for nuclear receptor-mediated transactivation. Involved in transcription elongation by recruiting the THO complex onto nascent mRNA. The AMEX complex functions in docking export-competent ribonucleoprotein particles (mRNPs) to the nuclear entrance of the nuclear pore complex (nuclear basket). AMEX participates in mRNA export and accurate chromatin positioning in the nucleus by tethering genes to the nuclear periphery. This chain is Enhancer of yellow 2 transcription factor, found in Drosophila virilis (Fruit fly).